We begin with the raw amino-acid sequence, 132 residues long: MSRKRTSPNRNVQIADQIQRDLSELIMREVKDPRIGIVTIQSVELTPDYAHAKVYFTALTGDPAKTQEALNHASGHLHNLLFKRLHIHTVPTLHFHYDQTIEKAVEMSRLIKEANSTRAKDDDEADAAAKDD.

It belongs to the RbfA family. Monomer. Binds 30S ribosomal subunits, but not 50S ribosomal subunits or 70S ribosomes.

Its subcellular location is the cytoplasm. Its function is as follows. One of several proteins that assist in the late maturation steps of the functional core of the 30S ribosomal subunit. Associates with free 30S ribosomal subunits (but not with 30S subunits that are part of 70S ribosomes or polysomes). Required for efficient processing of 16S rRNA. May interact with the 5'-terminal helix region of 16S rRNA. This chain is Ribosome-binding factor A, found in Burkholderia lata (strain ATCC 17760 / DSM 23089 / LMG 22485 / NCIMB 9086 / R18194 / 383).